Reading from the N-terminus, the 328-residue chain is MHNAIYTGLQKEVEVILATPRGFCAGVSRAIEIVKLAIEYYKDTKTIYVLHEIVHNKYIVETLKTMGVIFIDKVDQAQDGSVLIYSAHGVSKSIKQLAELRDLEVIDATCPLVNKVHKEVQLYDKSGYQVILIGHKGHREVEGTVGQISTPVIIVQNLNDIDKIEIFDPDKLAYVTQTTLSVDDTKVIIDKLKKKFPNIKGPDLKDICYATQNRQTTTKRLAELVDIVFILGSKNSSNSNRLKELAAIQTQAFLIDSYKEIDLNLLNDITKIGITAGASAPDILVQQVIDFLKQHMKVKLSDLEIVQESVTFNVPRQLRQYKEQYNPI.

Cys-24 is a [4Fe-4S] cluster binding site. Positions 55 and 88 each coordinate (2E)-4-hydroxy-3-methylbut-2-enyl diphosphate. Residues His-55 and His-88 each coordinate dimethylallyl diphosphate. Residues His-55 and His-88 each contribute to the isopentenyl diphosphate site. Cys-110 is a binding site for [4Fe-4S] cluster. (2E)-4-hydroxy-3-methylbut-2-enyl diphosphate is bound at residue His-138. Position 138 (His-138) interacts with dimethylallyl diphosphate. Position 138 (His-138) interacts with isopentenyl diphosphate. Glu-140 acts as the Proton donor in catalysis. Thr-178 lines the (2E)-4-hydroxy-3-methylbut-2-enyl diphosphate pocket. Residue Cys-208 coordinates [4Fe-4S] cluster. 4 residues coordinate (2E)-4-hydroxy-3-methylbut-2-enyl diphosphate: Ser-236, Ser-237, Asn-238, and Ser-279. Residues Ser-236, Ser-237, Asn-238, and Ser-279 each coordinate dimethylallyl diphosphate. Isopentenyl diphosphate-binding residues include Ser-236, Ser-237, Asn-238, and Ser-279.

This sequence belongs to the IspH family. [4Fe-4S] cluster serves as cofactor.

It carries out the reaction isopentenyl diphosphate + 2 oxidized [2Fe-2S]-[ferredoxin] + H2O = (2E)-4-hydroxy-3-methylbut-2-enyl diphosphate + 2 reduced [2Fe-2S]-[ferredoxin] + 2 H(+). The catalysed reaction is dimethylallyl diphosphate + 2 oxidized [2Fe-2S]-[ferredoxin] + H2O = (2E)-4-hydroxy-3-methylbut-2-enyl diphosphate + 2 reduced [2Fe-2S]-[ferredoxin] + 2 H(+). It functions in the pathway isoprenoid biosynthesis; dimethylallyl diphosphate biosynthesis; dimethylallyl diphosphate from (2E)-4-hydroxy-3-methylbutenyl diphosphate: step 1/1. Its pathway is isoprenoid biosynthesis; isopentenyl diphosphate biosynthesis via DXP pathway; isopentenyl diphosphate from 1-deoxy-D-xylulose 5-phosphate: step 6/6. Its function is as follows. Catalyzes the conversion of 1-hydroxy-2-methyl-2-(E)-butenyl 4-diphosphate (HMBPP) into a mixture of isopentenyl diphosphate (IPP) and dimethylallyl diphosphate (DMAPP). Acts in the terminal step of the DOXP/MEP pathway for isoprenoid precursor biosynthesis. The chain is 4-hydroxy-3-methylbut-2-enyl diphosphate reductase from Ehrlichia ruminantium (strain Gardel).